A 337-amino-acid polypeptide reads, in one-letter code: Putative 2-aminoethylphosphonate-binding periplasmic protein (337 aa).

The N-terminal stretch at 1–21 (MKLSRLALLSVFALASAPSWA) is a signal peptide.

This sequence belongs to the bacterial solute-binding protein 1 family.

The protein localises to the periplasm. Functionally, probably part of the PhnSTUV complex (TC 3.A.1.11.5) involved in 2-aminoethylphosphonate import. The polypeptide is Putative 2-aminoethylphosphonate-binding periplasmic protein (phnS) (Salmonella typhi).